Consider the following 227-residue polypeptide: UPF0173 metal-dependent hydrolase SSO0099 (227 aa).

This sequence belongs to the UPF0173 family.

The polypeptide is UPF0173 metal-dependent hydrolase SSO0099 (Saccharolobus solfataricus (strain ATCC 35092 / DSM 1617 / JCM 11322 / P2) (Sulfolobus solfataricus)).